The sequence spans 130 residues: Large ribosomal subunit protein bL12 (130 aa).

This sequence belongs to the bacterial ribosomal protein bL12 family. As to quaternary structure, homodimer. Part of the ribosomal stalk of the 50S ribosomal subunit. Forms a multimeric L10(L12)X complex, where L10 forms an elongated spine to which 2 to 4 L12 dimers bind in a sequential fashion. Binds GTP-bound translation factors.

In terms of biological role, forms part of the ribosomal stalk which helps the ribosome interact with GTP-bound translation factors. Is thus essential for accurate translation. In Synechococcus sp. (strain WH7803), this protein is Large ribosomal subunit protein bL12.